Consider the following 474-residue polypeptide: tRNA-2-methylthio-N(6)-dimethylallyladenosine synthase (474 aa).

The region spanning 3-120 (QKLHIKTWGC…LPEMINQIRA (118 aa)) is the MTTase N-terminal domain. Positions 12, 49, 83, 157, 161, and 164 each coordinate [4Fe-4S] cluster. Positions 143 to 375 (KAEGPTAFVS…QQRINNQAAQ (233 aa)) constitute a Radical SAM core domain. The TRAM domain maps to 378-441 (RAMLGTEQRV…TNSLRGDVVR (64 aa)).

This sequence belongs to the methylthiotransferase family. MiaB subfamily. Monomer. The cofactor is [4Fe-4S] cluster.

It localises to the cytoplasm. It carries out the reaction N(6)-dimethylallyladenosine(37) in tRNA + (sulfur carrier)-SH + AH2 + 2 S-adenosyl-L-methionine = 2-methylsulfanyl-N(6)-dimethylallyladenosine(37) in tRNA + (sulfur carrier)-H + 5'-deoxyadenosine + L-methionine + A + S-adenosyl-L-homocysteine + 2 H(+). Catalyzes the methylthiolation of N6-(dimethylallyl)adenosine (i(6)A), leading to the formation of 2-methylthio-N6-(dimethylallyl)adenosine (ms(2)i(6)A) at position 37 in tRNAs that read codons beginning with uridine. This Mannheimia succiniciproducens (strain KCTC 0769BP / MBEL55E) protein is tRNA-2-methylthio-N(6)-dimethylallyladenosine synthase.